A 181-amino-acid chain; its full sequence is Peptidyl-prolyl cis-trans isomerase H (181 aa).

Positions 17 to 180 (FFDITLGGES…QDVTIIQCGE (164 aa)) constitute a PPIase cyclophilin-type domain.

This sequence belongs to the cyclophilin-type PPIase family. PPIase H subfamily.

Its subcellular location is the nucleus. It catalyses the reaction [protein]-peptidylproline (omega=180) = [protein]-peptidylproline (omega=0). PPIases accelerate the folding of proteins. It catalyzes the cis-trans isomerization of proline imidic peptide bonds in oligopeptides. The chain is Peptidyl-prolyl cis-trans isomerase H (cyp3) from Aspergillus oryzae (strain ATCC 42149 / RIB 40) (Yellow koji mold).